The sequence spans 154 residues: Low molecular weight protein-tyrosine-phosphatase PtpA (154 aa).

Residue Cys8 is the Nucleophile of the active site. The active site involves Arg14. Residue Asp120 is the Proton donor of the active site.

Belongs to the low molecular weight phosphotyrosine protein phosphatase family. In terms of assembly, interacts with host CORO1A. Phosphorylations at Tyr-122 and Tyr-123 are essential for phosphatase activity.

It localises to the secreted. The catalysed reaction is O-phospho-L-tyrosyl-[protein] + H2O = L-tyrosyl-[protein] + phosphate. In terms of biological role, secreted tyrosine phosphatase that plays a critical role during infection as a bacterial effector protein that counteracts host defenses. Required for intramacrophage survival. The chain is Low molecular weight protein-tyrosine-phosphatase PtpA (ptpA) from Staphylococcus aureus (strain bovine RF122 / ET3-1).